The primary structure comprises 77 residues: Acyl carrier protein (77 aa).

The region spanning 2–77 (AEVLEKVTKI…DAVKYIEANA (76 aa)) is the Carrier domain. S37 is subject to O-(pantetheine 4'-phosphoryl)serine.

This sequence belongs to the acyl carrier protein (ACP) family. In terms of processing, 4'-phosphopantetheine is transferred from CoA to a specific serine of apo-ACP by AcpS. This modification is essential for activity because fatty acids are bound in thioester linkage to the sulfhydryl of the prosthetic group.

Its subcellular location is the cytoplasm. It functions in the pathway lipid metabolism; fatty acid biosynthesis. Its function is as follows. Carrier of the growing fatty acid chain in fatty acid biosynthesis. The polypeptide is Acyl carrier protein (Listeria innocua serovar 6a (strain ATCC BAA-680 / CLIP 11262)).